The following is a 28-amino-acid chain: fur leader peptide (28 aa).

Functionally, cotranscribed with fur, it is essential for fur translation. The fur ribosomal binding site (RBS) is occluded by the 5'-mRNA secondary structure, which is opened by uof translation. This is fur leader peptide (uof) from Escherichia coli (strain K12).